We begin with the raw amino-acid sequence, 223 residues long: Adenylate kinase 4, mitochondrial (223 aa).

15 to 20 (GSGKGT) contributes to the a ribonucleoside 5'-triphosphate binding site. Positions 35–64 (SSGHLLRENLKTGTEVGDVAKQYLEKGLLV) are NMP. Residues S36 and R41 each contribute to the AMP site. The residue at position 60 (K60) is an N6-succinyllysine. Residues 62 to 64 (LLV), 89 to 92 (GFPR), and Q96 each bind AMP. The segment at 125 to 162 (RRWIHPSSGRVYNLDFNPPQVQGIDDITGEPLVQQEDD) is LID. Residues R126 and 135 to 136 (VY) contribute to the a ribonucleoside 5'-triphosphate site. R170 is a binding site for AMP. Position 175 is an N6-acetyllysine (K175). Residues K179 and K186 each carry the N6-acetyllysine; alternate modification. 2 positions are modified to N6-succinyllysine; alternate: K179 and K186. T199 provides a ligand contact to a ribonucleoside 5'-triphosphate.

Belongs to the adenylate kinase family. AK3 subfamily. In terms of assembly, monomer. Interacts with SLC25A5/ANT2. Expressed in kidney, liver, stomach, brain, spinal cord, heart, ovary, oviduct, colon, jejunum, ileum and testis (at protein level). In the brain, expressed in the pyramidal cells of the cerebrum and glial cells in the cerebellum (at protein level). In the heart, expressed by myocytes (at protein level). In the kidney, expressed in the proximal to distal tubule in the cortex and the outer and inner zones of the medulla (at protein level). In the stomach, expressed in stratified squamous epithelia in the forestomach and in the gastric pit and mucus producing cells of the glandular stomach (at protein level). Expressed in epithelial cells of the jejunum, ileum, and colon (at protein level). In the testis, expressed by spermatocytes (at protein level). In the ovaries, expressed by oocytes, follicular epithelial cells, and corpus luteum cells (at protein level). In the oviduct, expressed in the epithelia of the isthmus and the ciliated cells of the ampulla (at protein level). Expressed in the pyramidal cells in the hippocampus.

It is found in the mitochondrion matrix. It carries out the reaction a ribonucleoside 5'-phosphate + ATP = a ribonucleoside 5'-diphosphate + ADP. It catalyses the reaction AMP + ATP = 2 ADP. The enzyme catalyses GTP + AMP = GDP + ADP. The catalysed reaction is CMP + ATP = CDP + ADP. It carries out the reaction GTP + CMP = CDP + GDP. It catalyses the reaction dAMP + ATP = dADP + ADP. The enzyme catalyses dCMP + ATP = dCDP + ADP. The catalysed reaction is a 2'-deoxyribonucleoside 5'-diphosphate + ATP = a 2'-deoxyribonucleoside 5'-triphosphate + ADP. It carries out the reaction a ribonucleoside 5'-diphosphate + ATP = a ribonucleoside 5'-triphosphate + ADP. It catalyses the reaction GDP + ATP = GTP + ADP. The enzyme catalyses CDP + GTP = CTP + GDP. The catalysed reaction is CDP + ATP = CTP + ADP. It carries out the reaction UDP + ATP = UTP + ADP. It catalyses the reaction GTP + UDP = UTP + GDP. The enzyme catalyses dADP + GTP = dATP + GDP. The catalysed reaction is dCDP + GTP = dCTP + GDP. It carries out the reaction dCDP + ATP = dCTP + ADP. It catalyses the reaction dGDP + ATP = dGTP + ADP. The enzyme catalyses dTDP + GTP = dTTP + GDP. The catalysed reaction is dTDP + ATP = dTTP + ADP. Its function is as follows. Broad-specificity mitochondrial nucleoside phosphate kinase involved in cellular nucleotide homeostasis by catalyzing nucleoside-phosphate interconversions. Similar to other adenylate kinases, preferentially catalyzes the phosphorylation of the nucleoside monophosphate AMP with ATP as phosphate donor to produce ADP. Phosphorylates only AMP when using GTP as phosphate donor. In vitro, can also catalyze the phosphorylation of CMP, dAMP and dCMP and use GTP as an alternate phosphate donor. Moreover, exhibits a diphosphate kinase activity, producing ATP, CTP, GTP, UTP, TTP, dATP, dCTP and dGTP from the corresponding diphosphate substrates with either ATP or GTP as phosphate donors. Plays a role in controlling cellular ATP levels by regulating phosphorylation and activation of the energy sensor protein kinase AMPK. Plays a protective role in the cellular response to oxidative stress. The sequence is that of Adenylate kinase 4, mitochondrial from Mus musculus (Mouse).